The following is a 96-amino-acid chain: Large ribosomal subunit protein uL23 (96 aa).

It belongs to the universal ribosomal protein uL23 family. As to quaternary structure, part of the 50S ribosomal subunit. Contacts protein L29, and trigger factor when it is bound to the ribosome.

Its function is as follows. One of the early assembly proteins it binds 23S rRNA. One of the proteins that surrounds the polypeptide exit tunnel on the outside of the ribosome. Forms the main docking site for trigger factor binding to the ribosome. In Clostridioides difficile (strain 630) (Peptoclostridium difficile), this protein is Large ribosomal subunit protein uL23.